A 204-amino-acid chain; its full sequence is Abscisic acid receptor PYL3 (204 aa).

The tract at residues 40–191 (HEPRDHQCSS…NLKSLAEVSE (152 aa)) is START-like. A disulfide bond links Cys47 and Cys172. Abscisate-binding positions include Lys76, 104-109 (ATRSTE), 131-137 (RLKNYSS), and Glu156. Residues 100–104 (SGLPA) carry the Gate loop motif. A Latch loop motif is present at residues 130-132 (HRL).

The protein belongs to the PYR/PYL/RCAR abscisic acid intracellular receptor family. In terms of assembly, monomer. Interacts with PP2C50. Binding to PP2C50 is dependent on the presence of abscisic acid (ABA). Interacts with PP2C30 and PP2C53.

Its subcellular location is the cytoplasm. It is found in the cytosol. The protein resides in the nucleus. Involved in abscisic acid (ABA) signaling during seed germination and abiotic stress response. Acts as a positive regulator of ABA-mediated inhibition of seed germination, and tolerance to drought and cold stresses. Together with PP2C50 and SAPK10, may form an ABA signaling module involved in stress response. Inhibits the protein phosphatases PP2C06 and PP2C09 when activated by abscisic acid (ABA). This Oryza sativa subsp. japonica (Rice) protein is Abscisic acid receptor PYL3.